Reading from the N-terminus, the 407-residue chain is Serine/threonine transporter SstT (407 aa).

The next 9 membrane-spanning stretches (helical) occupy residues alanine 10–isoleucine 30, leucine 42–isoleucine 62, isoleucine 81–phenylalanine 101, alanine 141–leucine 161, valine 179–alanine 199, isoleucine 218–phenylalanine 238, phenylalanine 245–alanine 267, isoleucine 288–leucine 308, and valine 316–alanine 336.

Belongs to the dicarboxylate/amino acid:cation symporter (DAACS) (TC 2.A.23) family.

It is found in the cell inner membrane. It catalyses the reaction L-serine(in) + Na(+)(in) = L-serine(out) + Na(+)(out). The catalysed reaction is L-threonine(in) + Na(+)(in) = L-threonine(out) + Na(+)(out). In terms of biological role, involved in the import of serine and threonine into the cell, with the concomitant import of sodium (symport system). In Campylobacter jejuni subsp. doylei (strain ATCC BAA-1458 / RM4099 / 269.97), this protein is Serine/threonine transporter SstT.